The sequence spans 234 residues: Phosphoribosylaminoimidazole-succinocarboxamide synthase (234 aa).

It belongs to the SAICAR synthetase family.

The catalysed reaction is 5-amino-1-(5-phospho-D-ribosyl)imidazole-4-carboxylate + L-aspartate + ATP = (2S)-2-[5-amino-1-(5-phospho-beta-D-ribosyl)imidazole-4-carboxamido]succinate + ADP + phosphate + 2 H(+). It participates in purine metabolism; IMP biosynthesis via de novo pathway; 5-amino-1-(5-phospho-D-ribosyl)imidazole-4-carboxamide from 5-amino-1-(5-phospho-D-ribosyl)imidazole-4-carboxylate: step 1/2. In Exiguobacterium sp. (strain ATCC BAA-1283 / AT1b), this protein is Phosphoribosylaminoimidazole-succinocarboxamide synthase.